We begin with the raw amino-acid sequence, 183 residues long: Putative manganese efflux pump MntP (183 aa).

6 helical membrane passes run 8–28 (MIAL…VALG), 39–59 (IFYI…VGMA), 68–88 (FGSI…GQMI), 108–128 (LFFA…LGIF), 133–153 (MATI…GLLV), and 162–182 (GSYS…KLLF).

The protein belongs to the MntP (TC 9.B.29) family.

Its subcellular location is the cell membrane. Its function is as follows. Probably functions as a manganese efflux pump. The polypeptide is Putative manganese efflux pump MntP (Geobacillus thermodenitrificans (strain NG80-2)).